We begin with the raw amino-acid sequence, 197 residues long: Dephospho-CoA kinase (197 aa).

The 195-residue stretch at 3-197 (VYGLTGGIGS…QSLLHTHQNT (195 aa)) folds into the DPCK domain. 11–16 (GSGKTT) lines the ATP pocket.

This sequence belongs to the CoaE family.

The protein localises to the cytoplasm. The enzyme catalyses 3'-dephospho-CoA + ATP = ADP + CoA + H(+). Its pathway is cofactor biosynthesis; coenzyme A biosynthesis; CoA from (R)-pantothenate: step 5/5. Its function is as follows. Catalyzes the phosphorylation of the 3'-hydroxyl group of dephosphocoenzyme A to form coenzyme A. This chain is Dephospho-CoA kinase, found in Hydrogenovibrio crunogenus (strain DSM 25203 / XCL-2) (Thiomicrospira crunogena).